A 360-amino-acid polypeptide reads, in one-letter code: Uptake hydrogenase small subunit (360 aa).

The segment at residues 1-46 (MATAETFYDVIRRQGITRRSFTKFCSLTAASLGFGPGAATAMAEAL) is a signal peptide (tat-type signal). [4Fe-4S] cluster contacts are provided by Cys-62, Cys-65, Cys-160, Cys-194, His-232, Cys-235, Cys-260, and Cys-266. The [3Fe-4S] cluster site is built by Cys-275, Cys-294, and Cys-297.

Belongs to the [NiFe]/[NiFeSe] hydrogenase small subunit family. Heterodimer of a large and a small subunit. [4Fe-4S] cluster serves as cofactor. [3Fe-4S] cluster is required as a cofactor. Predicted to be exported by the Tat system. The position of the signal peptide cleavage has not been experimentally proven.

The protein localises to the cell membrane. The enzyme catalyses H2 + A = AH2. In terms of biological role, this enzyme recycles the H(2) produced by nitrogenase to increase the production of ATP and to protect nitrogenase against inhibition or damage by O(2) under carbon- or phosphate-limited conditions. The sequence is that of Uptake hydrogenase small subunit (hupA) from Rhizobium leguminosarum bv. viciae.